The chain runs to 101 residues: Enhancer of yellow 2 transcription factor (101 aa).

The protein belongs to the ENY2 family. Component of the nuclear pore complex (NPC)-associated TREX-2/AMEX complex (anchoring and mRNA export complex), composed of e(y)2, xmas and PCID2. Within the TREX-2/ AMEX complex, interactions with xmas is required for localization to the nuclear periphery. Component of the SAGA transcription coactivator-HAT complexes, at least composed of Ada2b, e(y)2, Pcaf/Gcn5, Taf10 and Nipped-A/Trrap. Within the SAGA complex, e(y)2, Sgf11, and not/nonstop form an additional subcomplex of SAGA called the DUB module (deubiquitination module). Component of the THO complex, composed of at least e(y)2, HPR1, THO2, THOC5, THOC6 and THOC7. Interacts with Taf9. Interacts with su(Hw) (via zinc fingers). Interacts with the nuclear pore complex (NPC). Interaction between the TREX-2/AMEX complex and the ORC complex is required for ORC localization to mRNPs, and consequently mRNA export. Within the TREX-2/AMEX-ORC complex, interacts with Orc6 and (via N-terminus or C-terminus) with Orc3. Interacts with the zinc finger protein CG9890. In terms of tissue distribution, ubiquitous.

It is found in the nucleus. Its subcellular location is the nucleoplasm. It localises to the cytoplasm. The protein localises to the nucleus membrane. Involved in mRNA export coupled transcription activation by association with both the TREX-2/AMEX and the SAGA complexes. The SAGA complex is a multiprotein complex that activates transcription by remodeling chromatin and mediating histone acetylation and deubiquitination. Within the SAGA complex, participates in a subcomplex that specifically deubiquitinates histone H2B. The SAGA complex is recruited to specific gene promoters by activators, where it is required for transcription. Required for nuclear receptor-mediated transactivation. Involved in transcription elongation by recruiting the THO complex onto nascent mRNA. The TREX-2/AMEX complex functions in docking export-competent ribonucleoprotein particles (mRNPs) to the nuclear entrance of the nuclear pore complex (nuclear basket). TREX-2/AMEX participates in mRNA export and accurate chromatin positioning in the nucleus by tethering genes to the nuclear periphery. Recruited to the su(Hw) insulators via its interaction with su(Hw) and participates in the barrier activity of such insulators. In contrast, it does not participate in the enhancer-blocking activity of the su(Hw) insulators. The chain is Enhancer of yellow 2 transcription factor from Drosophila melanogaster (Fruit fly).